We begin with the raw amino-acid sequence, 105 residues long: Translation initiation factor 1A (105 aa).

The S1-like domain occupies 12 to 87 (TRVRTPREEN…QKCDIIWRYT (76 aa)).

It belongs to the eIF-1A family.

Its function is as follows. Seems to be required for maximal rate of protein biosynthesis. Enhances ribosome dissociation into subunits and stabilizes the binding of the initiator Met-tRNA(I) to 40 S ribosomal subunits. The chain is Translation initiation factor 1A (eIF1A) from Methanococcus aeolicus (strain ATCC BAA-1280 / DSM 17508 / OCM 812 / Nankai-3).